The following is a 704-amino-acid chain: Conserved oligomeric Golgi complex subunit 6 (704 aa).

It belongs to the COG6 family.

Its subcellular location is the golgi apparatus membrane. Its function is as follows. Acts as a component of the peripheral membrane COG complex that is involved in intra-Golgi protein trafficking. COG is located at the cis-Golgi, and regulates tethering of retrograde intra-Golgi vesicles and possibly a number of other membrane trafficking events. The sequence is that of Conserved oligomeric Golgi complex subunit 6 (COG6) from Pyricularia oryzae (strain 70-15 / ATCC MYA-4617 / FGSC 8958) (Rice blast fungus).